The primary structure comprises 585 residues: Aspartate--tRNA ligase (585 aa).

Residue E171 participates in L-aspartate binding. The segment at 195-198 (QLFK) is aspartate. R217 serves as a coordination point for L-aspartate. ATP-binding positions include 217 to 219 (RDE) and Q226. L-aspartate is bound at residue H448. E482 contributes to the ATP binding site. R489 provides a ligand contact to L-aspartate. Residue 534–537 (GLDR) participates in ATP binding.

Belongs to the class-II aminoacyl-tRNA synthetase family. Type 1 subfamily. As to quaternary structure, homodimer.

It localises to the cytoplasm. It carries out the reaction tRNA(Asp) + L-aspartate + ATP = L-aspartyl-tRNA(Asp) + AMP + diphosphate. In terms of biological role, catalyzes the attachment of L-aspartate to tRNA(Asp) in a two-step reaction: L-aspartate is first activated by ATP to form Asp-AMP and then transferred to the acceptor end of tRNA(Asp). The polypeptide is Aspartate--tRNA ligase (Histophilus somni (strain 129Pt) (Haemophilus somnus)).